A 190-amino-acid chain; its full sequence is NADH dehydrogenase [ubiquinone] iron-sulfur protein 3 (190 aa).

Belongs to the complex I 30 kDa subunit family. As to quaternary structure, complex I is composed of at least 49 different subunits. This is a component of the iron-sulfur (IP) fragment of the enzyme.

It is found in the mitochondrion inner membrane. The enzyme catalyses a ubiquinone + NADH + 5 H(+)(in) = a ubiquinol + NAD(+) + 4 H(+)(out). Its function is as follows. Core subunit of the mitochondrial membrane respiratory chain NADH dehydrogenase (Complex I) that is believed to belong to the minimal assembly required for catalysis. Complex I functions in the transfer of electrons from NADH to the respiratory chain. The immediate electron acceptor for the enzyme is believed to be ubiquinone. The polypeptide is NADH dehydrogenase [ubiquinone] iron-sulfur protein 3 (NAD9) (Arabidopsis thaliana (Mouse-ear cress)).